Reading from the N-terminus, the 416-residue chain is TNF receptor-associated factor 1 (416 aa).

A disordered region spans residues 1 to 24 (MASSSGSSPRPAPDENEFPFGCPP). Ser-146 bears the Phosphoserine mark. The stretch at 182–264 (MKEKLLAELE…QSLRLMEEAS (83 aa)) forms a coiled coil. Residues Lys-185 and Lys-193 each participate in a glycyl lysine isopeptide (Lys-Gly) (interchain with G-Cter in ubiquitin) cross-link. The 147-residue stretch at 266–412 (DGTFLWKITN…DDTMFLKCIV (147 aa)) folds into the MATH domain.

Homotrimer. Heterotrimer with TRAF2. Interacts with TNFRSF1A/TNFR1, TNFRSF1B/TNFR2, TNFRSF4, TNFRSF5/CD40, TNFRSF8/CD30, TNFRSF9/CD137, TNFRSF11A/RANK, TNFRSF13C, TNFRSF18/AITR, TNFRSF17/BCMA, TNFRSF19/TROY, TNFRSF19L/RELT, XEDAR, EDAR, Epstein-Barr virus BNFL1/LMP-1, TANK/ITRAF, TRAIP and RIPK2. Interacts with BIRC2 and BIRC3 N-terminus; a single BIRC2 or BIRC3 molecule interacts with a heterotrimer formed by TRAF1 and TRAF2. Interacts with NFATC2IP, TRAFD1 and with HIVEP3. Interacts with MAP3K14. Interacts with GPS2. Post-translationally, polyubiquitinated by BIRC2 and/or BIRC3, leading to its subsequent proteasomal degradation. Ubiquitinated by the SCF(FBXL2) complex, leading to its degradation by the proteasome.

Adapter molecule that regulates the activation of NF-kappa-B and JNK. Plays a role in the regulation of cell survival and apoptosis. The heterotrimer formed by TRAF1 and TRAF2 is part of a E3 ubiquitin-protein ligase complex that promotes ubiquitination of target proteins, such as MAP3K14. The TRAF1/TRAF2 complex recruits the antiapoptotic E3 protein-ubiquitin ligases BIRC2 and BIRC3 to TNFRSF1B/TNFR2. The polypeptide is TNF receptor-associated factor 1 (TRAF1) (Homo sapiens (Human)).